The primary structure comprises 55 residues: Large ribosomal subunit protein bL33 (55 aa).

It belongs to the bacterial ribosomal protein bL33 family.

In Azorhizobium caulinodans (strain ATCC 43989 / DSM 5975 / JCM 20966 / LMG 6465 / NBRC 14845 / NCIMB 13405 / ORS 571), this protein is Large ribosomal subunit protein bL33.